We begin with the raw amino-acid sequence, 41 residues long: Large ribosomal subunit protein bL36B (41 aa).

The protein belongs to the bacterial ribosomal protein bL36 family.

The polypeptide is Large ribosomal subunit protein bL36B (Haemophilus ducreyi (strain 35000HP / ATCC 700724)).